Reading from the N-terminus, the 29-residue chain is Conotoxin SIVC (29 aa).

A1 bears the N-acetylalanine; partial mark. 4-hydroxyproline is present on P2. Residues T7 and T9 are each glycosylated (O-linked (HexNAc...) threonine). Residues P18 and P22 each carry the 4-hydroxyproline modification. C29 is modified (cysteine amide).

The protein belongs to the conotoxin A superfamily. Post-translationally, O-linked glycans consist of Hex4-HexNAc2 hexasaccharides. In terms of processing, N-terminus is found to be free and N-acetylated, depending on the fraction studied. Contains 3 disulfide bonds. In terms of tissue distribution, expressed by the venom duct. Low expression in the distal venom duct sections.

The protein localises to the secreted. Probable neurotoxin with ion channel inhibitor activity. The polypeptide is Conotoxin SIVC (Conus striatus (Striated cone)).